We begin with the raw amino-acid sequence, 380 residues long: DNA replication and repair protein RecF (380 aa).

30-37 serves as a coordination point for ATP; that stretch reads GPNGFGKT.

The protein belongs to the RecF family.

Its subcellular location is the cytoplasm. Functionally, the RecF protein is involved in DNA metabolism; it is required for DNA replication and normal SOS inducibility. RecF binds preferentially to single-stranded, linear DNA. It also seems to bind ATP. In Mycobacterium sp. (strain JLS), this protein is DNA replication and repair protein RecF.